The primary structure comprises 362 residues: Very-long-chain (3R)-3-hydroxyacyl-CoA dehydratase 3 (362 aa).

Met-1 is subject to N-acetylmethionine. Residues 1 to 149 (MENQVLTPHV…ETLTSLKKGY (149 aa)) lie on the Cytoplasmic side of the membrane. The 90-residue stretch at 5–94 (VLTPHVYWAQ…KESQWWERLT (90 aa)) folds into the CS domain. Thr-7 carries the phosphothreonine modification. Residues 111-136 (LDESDAEMELRAKEEEQLNKLRLESQ) adopt a coiled-coil conformation. A phosphoserine mark is found at Ser-114 and Ser-135. The chain crosses the membrane as a helical span at residues 150–170 (LFMYNLVQFLGFSWIFVNMTV). Over 171–189 (RFFILGKESFYDTFHTVAD) the chain is Lumenal. Residues 190-210 (MMYFCQMLAAVESINAAIGVT) traverse the membrane as a helical segment. Over 211–212 (KS) the chain is Cytoplasmic. A helical transmembrane segment spans residues 213 to 233 (PVVPSLFQLLGRNFILFIIFG). The Lumenal segment spans residues 234 to 242 (TMEEMQNKA). A helical membrane pass occupies residues 243–263 (VVFFVFYIWSTVEIFRYPFYM). Topologically, residues 264 to 280 (LSCIDMDWKVLTWLRYT) are cytoplasmic. A helical membrane pass occupies residues 281–301 (VWIPLYPMGCLAEAVSVIQSI). Catalysis depends on residues Tyr-286 and Glu-293. The Lumenal portion of the chain corresponds to 302–325 (PVFNETGRFSFTLPYPVKIKVRFS). The chain crosses the membrane as a helical span at residues 326-346 (FFLQIYLILLFLGLYVNFRYL). Residues 347 to 362 (YKQRRRRFGQKKKKIH) are Cytoplasmic-facing.

This sequence belongs to the very long-chain fatty acids dehydratase HACD family. As to quaternary structure, may interact with enzymes of the ELO family (including ELOVL1); with those enzymes that mediate condensation, the first of the four steps of the reaction cycle responsible for fatty acids elongation, may be part of a larger fatty acids elongase complex. Interacts with RAC1. Associates with internalized insulin receptor/INSR complexes on Golgi/endosomal membranes; HACD3/PTPLAD1 together with ATIC and PRKAA2/AMPK2 is proposed to be part of a signaling network regulating INSR autophosphorylation and endocytosis.

Its subcellular location is the endoplasmic reticulum membrane. It carries out the reaction a very-long-chain (3R)-3-hydroxyacyl-CoA = a very-long-chain (2E)-enoyl-CoA + H2O. The catalysed reaction is (3R)-hydroxyhexadecanoyl-CoA = (2E)-hexadecenoyl-CoA + H2O. It functions in the pathway lipid metabolism; fatty acid biosynthesis. Catalyzes the third of the four reactions of the long-chain fatty acids elongation cycle. This endoplasmic reticulum-bound enzymatic process, allows the addition of two carbons to the chain of long- and very long-chain fatty acids/VLCFAs per cycle. This enzyme catalyzes the dehydration of the 3-hydroxyacyl-CoA intermediate into trans-2,3-enoyl-CoA, within each cycle of fatty acid elongation. Thereby, it participates in the production of VLCFAs of different chain lengths that are involved in multiple biological processes as precursors of membrane lipids and lipid mediators. Involved in Rac1-signaling pathways leading to the modulation of gene expression. Promotes insulin receptor/INSR autophosphorylation and is involved in INSR internalization. This chain is Very-long-chain (3R)-3-hydroxyacyl-CoA dehydratase 3, found in Bos taurus (Bovine).